The sequence spans 1214 residues: Delta-latroinsectotoxin-Lt1a (1214 aa).

Residues 64–89 (IGSIPVIGEVVGIVTAPIAIVSHITS) are helix H2 is the probable transmembrane region of the tetrameric pore inserted in the target cell membrane. The interval 250–269 (ALYALFYGTQTYAAVMFFLL) is helix H8 is the probable transmembrane region of the tetrameric pore inserted in the target cell membrane. ANK repeat units follow at residues 464 to 497 (DIHR…DIEA), 501 to 532 (NDRS…DIEL), 536 to 565 (NGFT…DVNA), 570 to 600 (TNLT…KVNE), 604 to 633 (DGFT…DKNA), 637 to 666 (SGLT…DLNI), 670 to 699 (NHMA…KVSI), 706 to 734 (NNWT…DINL), 740 to 769 (GNLT…NIEE), 773 to 802 (EGYT…DIEA), 806 to 835 (DNLT…DIGA), 839 to 868 (DGST…NLKE), 872 to 901 (NKYL…SLKD), 906 to 936 (EGRT…TLDE), and 966 to 994 (VKPT…PEGS). Positions 1020–1214 (IVKETNSRYL…IDVHQKMFLR (195 aa)) are cleaved as a propeptide — C-terminal domain cleavage is required for toxin activation.

Belongs to the cationic peptide 01 (latrotoxin) family. 04 (delta-latroinsectotoxin) subfamily. Homotetramer in membrane. As to expression, expressed by the venom gland.

It is found in the secreted. It localises to the target cell membrane. Functionally, insecticidal presynaptic neurotoxin that induces massive neurotransmitter release at insect (but not vertebrate) neuromuscular junctions. Native toxin forms cation-permeable pores (with high permeability to calcium) in lipid membranes locust muscle membrane and artificial lipid bilayers. May bind to insect neurexin-1 homolog, insect adhesion G protein-coupled receptor L1 homolog, and insect receptor-type tyrosine-protein phosphatase S homolog, and induces neurotransmitter exocytosis both by forming tetrameric pores in membranes and signaling via G protein-coupled receptor. Oligomerization is a process independent of divalent cations. The polypeptide is Delta-latroinsectotoxin-Lt1a (Latrodectus tredecimguttatus (Mediterranean black widow spider)).